The following is a 550-amino-acid chain: Glucose-6-phosphate isomerase (550 aa).

Glutamate 356 (proton donor) is an active-site residue. Active-site residues include histidine 387 and lysine 515.

This sequence belongs to the GPI family.

It localises to the cytoplasm. It catalyses the reaction alpha-D-glucose 6-phosphate = beta-D-fructose 6-phosphate. Its pathway is carbohydrate biosynthesis; gluconeogenesis. The protein operates within carbohydrate degradation; glycolysis; D-glyceraldehyde 3-phosphate and glycerone phosphate from D-glucose: step 2/4. In terms of biological role, catalyzes the reversible isomerization of glucose-6-phosphate to fructose-6-phosphate. The chain is Glucose-6-phosphate isomerase from Syntrophobacter fumaroxidans (strain DSM 10017 / MPOB).